We begin with the raw amino-acid sequence, 315 residues long: Ribosomal RNA small subunit methyltransferase H (315 aa).

S-adenosyl-L-methionine-binding positions include 33–35 (GGH), aspartate 52, phenylalanine 84, aspartate 106, and glutamine 113. The tract at residues 294–315 (SSDELEENNRSHSAKLRVAEKL) is disordered.

Belongs to the methyltransferase superfamily. RsmH family.

The protein resides in the cytoplasm. It catalyses the reaction cytidine(1402) in 16S rRNA + S-adenosyl-L-methionine = N(4)-methylcytidine(1402) in 16S rRNA + S-adenosyl-L-homocysteine + H(+). In terms of biological role, specifically methylates the N4 position of cytidine in position 1402 (C1402) of 16S rRNA. The sequence is that of Ribosomal RNA small subunit methyltransferase H from Lactobacillus johnsonii (strain CNCM I-12250 / La1 / NCC 533).